The primary structure comprises 430 residues: uncharacterized protein (430 aa).

Helical transmembrane passes span 18-38 (LFLLTIGGLYSLGIALSNTFV), 49-69 (FIDLAIYNLSIVTMQPITFYL), 80-100 (VFILRFGVIFLAAFYLSVLLA), 109-129 (VLIGAVLGVGYGFYWLAFNVL), 145-165 (FMGILSSSAGMIGPIVAGFVI), 175-195 (TVIFSLSLSLFALAVVMSFFL), 235-255 (IFVFLISVFVFIETNSELALG), 256-276 (TFGLVNSAVSFFAYYFASRLI), 285-305 (ILLGGLILYGALFLILFHMSF), 307-327 (TLLTYGVFIAIGYPLLLVPYV), 353-373 (MFLNAGRIVSILCFLLIVALL), and 377-397 (VGIPLSLAILGIGHPLIYYFV). The interval 407–430 (GENETMEEDGQKRVTEPTLLKGER) is disordered. Residues 415 to 430 (DGQKRVTEPTLLKGER) show a composition bias toward basic and acidic residues.

The protein resides in the cell membrane. This is an uncharacterized protein from Bacillus subtilis (strain 168).